The sequence spans 244 residues: Phosphoadenosine 5'-phosphosulfate reductase (244 aa).

Cys-239 serves as the catalytic Nucleophile; cysteine thiosulfonate intermediate.

Belongs to the PAPS reductase family. CysH subfamily.

Its subcellular location is the cytoplasm. It carries out the reaction [thioredoxin]-disulfide + sulfite + adenosine 3',5'-bisphosphate + 2 H(+) = [thioredoxin]-dithiol + 3'-phosphoadenylyl sulfate. The protein operates within sulfur metabolism; hydrogen sulfide biosynthesis; sulfite from sulfate: step 3/3. In terms of biological role, catalyzes the formation of sulfite from phosphoadenosine 5'-phosphosulfate (PAPS) using thioredoxin as an electron donor. The sequence is that of Phosphoadenosine 5'-phosphosulfate reductase from Cronobacter sakazakii (strain ATCC BAA-894) (Enterobacter sakazakii).